We begin with the raw amino-acid sequence, 156 residues long: MQVQNIEGTLTAQGIRFGLVVSRFNDFIGQKLVEGAIDCIVRHGGSADNITVIRCPGAFELPSVTRKAAMSGKFDAMITLGVIIRGSTPHFDVIAAEATKGIAQVGLETMIPITFGVLTTENLEQAIERAGTKAGNKGFDAALGAIEMVNLYKQLG.

Residues F24, 58-60 (AFE), and 82-84 (VII) each bind 5-amino-6-(D-ribitylamino)uracil. 87–88 (ST) contacts (2S)-2-hydroxy-3-oxobutyl phosphate. The Proton donor role is filled by H90. A 5-amino-6-(D-ribitylamino)uracil-binding site is contributed by F115. (2S)-2-hydroxy-3-oxobutyl phosphate is bound at residue R129.

The protein belongs to the DMRL synthase family.

It carries out the reaction (2S)-2-hydroxy-3-oxobutyl phosphate + 5-amino-6-(D-ribitylamino)uracil = 6,7-dimethyl-8-(1-D-ribityl)lumazine + phosphate + 2 H2O + H(+). It participates in cofactor biosynthesis; riboflavin biosynthesis; riboflavin from 2-hydroxy-3-oxobutyl phosphate and 5-amino-6-(D-ribitylamino)uracil: step 1/2. Its function is as follows. Catalyzes the formation of 6,7-dimethyl-8-ribityllumazine by condensation of 5-amino-6-(D-ribitylamino)uracil with 3,4-dihydroxy-2-butanone 4-phosphate. This is the penultimate step in the biosynthesis of riboflavin. This chain is 6,7-dimethyl-8-ribityllumazine synthase, found in Chlorobaculum parvum (strain DSM 263 / NCIMB 8327) (Chlorobium vibrioforme subsp. thiosulfatophilum).